Here is a 172-residue protein sequence, read N- to C-terminus: Resuscitation-promoting factor RpfE (172 aa).

A signal peptide spans 1-28 (MKNARTTLIAAAIAGTLVTTSPAGIANA). Residues 33–89 (LDPNAAAGPDAVGFDPNLPPAPDAAPVDTPPAPEDAGFDPNLPPPLAPDFLSPPAEE) are disordered. The span at 49 to 65 (NLPPAPDAAPVDTPPAP) shows a compositional bias: pro residues.

This sequence belongs to the transglycosylase family. Rpf subfamily. As to quaternary structure, interacts with RipA.

Factor that stimulates resuscitation of dormant cells. Has peptidoglycan (PG) hydrolytic activity. Active in the pM concentration range. Has little to no effect on actively-growing cells. PG fragments could either directly activate the resuscitation pathway of dormant bacteria or serve as a substrate for endogenous Rpf, resulting in low molecular weight products with resuscitation activity. Functionally, stimulates growth of stationary phase M.bovis (a slow-growing Mycobacterium), reduces the lag phase of diluted fast-growers M.smegmatis and Micrococcus luteus. Sequential gene disruption indicates RpfB and RpfE are higher than RpfD and RpfC in functional hierarchy. The chain is Resuscitation-promoting factor RpfE (rpfE) from Mycobacterium tuberculosis (strain ATCC 25618 / H37Rv).